The following is a 197-amino-acid chain: MGGKLSKKKKGYNVNDEKAKEKDAKTEGASAEESEAPKENKEDAAAATETTNDTAAAAKEATPTADSNSTAPKEEEKSAAPPKKEEPAANANANAPKASDAKTSEAAKAEPAKSPDAPPVKAEEKSAPSAAPANEKEPAKEAAKDPAPAVAAASESKPDAESKKTEAPPTKESAPAEPITTETSPAPNKEQAVAVQD.

The span at 1 to 11 shows a compositional bias: basic residues; the sequence is MGGKLSKKKKG. Positions 1–197 are disordered; it reads MGGKLSKKKK…NKEQAVAVQD (197 aa). Residue glycine 2 is the site of N-myristoyl glycine attachment. Basic and acidic residues-rich tracts occupy residues 15–26 and 35–44; these read NDEKAKEKDAKT and EAPKENKEDA. Low complexity predominate over residues 45–66; that stretch reads AAATETTNDTAAAAKEATPTAD. Over residues 72-87 the composition is skewed to basic and acidic residues; it reads PKEEEKSAAPPKKEEP. A compositionally biased stretch (low complexity) spans 88 to 98; that stretch reads AANANANAPKA. 2 stretches are compositionally biased toward basic and acidic residues: residues 99–113 and 134–144; these read SDAKTSEAAKAEPAK and NEKEPAKEAAK. Positions 145–155 are enriched in low complexity; it reads DPAPAVAAASE. Basic and acidic residues predominate over residues 156–166; it reads SKPDAESKKTE.

It belongs to the BASP1 family.

It is found in the cell membrane. This chain is Brain acid soluble protein 1 homolog (basp1), found in Danio rerio (Zebrafish).